We begin with the raw amino-acid sequence, 308 residues long: RNA pseudouridylate synthase domain-containing protein 1 (308 aa).

Position 1 is an N-acetylmethionine (Met-1). Asp-67 is a catalytic residue. The tract at residues 257–292 (APDPDPSEGGPGPCSPCTPLPGPGRPPPPPETEVQR) is disordered. A compositionally biased stretch (pro residues) spans 269–287 (PCSPCTPLPGPGRPPPPPE).

Belongs to the pseudouridine synthase RluA family.

The polypeptide is RNA pseudouridylate synthase domain-containing protein 1 (RPUSD1) (Bos taurus (Bovine)).